The chain runs to 273 residues: MSDIETVSSFVEGAPPGELADVIADIKSLTLETNPDIVNSLTPAFEKYNEEQFVTVKLPGSSQPVIISSYNSLGDGRYFDVESSSSFTFDHTTQKASAVQSHVLEGAQADLVKSTLKSIGPYVDEHFANAAHGVYPIESDSKIAIVIVGNKYSPNNFWNGRWRSLYILDPSSGALEGSLKVDVHYYEDGNVRLLTNKPVSSTISSANGAGIVREISAMEKRYQEELNKGFVSLSEGAFKGLRRQLPVTRQKIEWDRVTSYRLGQDIGNGGSRR.

It belongs to the F-actin-capping protein alpha subunit family. As to quaternary structure, heterodimer of an alpha and a beta subunit.

The protein resides in the cytoplasm. It is found in the cytoskeleton. Its function is as follows. F-actin-capping proteins bind in a Ca(2+)-independent manner to the fast growing ends of actin filaments (barbed end) thereby blocking the exchange of subunits at these ends. Unlike other capping proteins (such as gelsolin and severin), these proteins do not sever actin filaments. This Gibberella zeae (strain ATCC MYA-4620 / CBS 123657 / FGSC 9075 / NRRL 31084 / PH-1) (Wheat head blight fungus) protein is F-actin-capping protein subunit alpha (CAP1).